The following is a 309-amino-acid chain: Zinc transporter ZIPB (309 aa).

Residues 1-22 lie on the Periplasmic side of the membrane; the sequence is MNQPSSLAADLRGAWHAQAQSH. Residues 23 to 50 traverse the membrane as a helical segment; the sequence is PLITLGLAASAAGVVLLLVAGIVNALTG. Topologically, residues 51–55 are extracellular; sequence ENRVH. A helical transmembrane segment spans residues 56 to 81; it reads VGYAVLGGAAGFAATALGALMALGLR. At 82–83 the chain is on the periplasmic side; that stretch reads AI. The helical transmembrane segment at 84–119 threads the bilayer; the sequence is SARTQDAMLGFAAGMMLAASAFSLILPGLDAAGTIV. Aspartate 89 is a binding site for Zn(2+). A Cd(2+)-binding site is contributed by methionine 99. Topologically, residues 120 to 121 are extracellular; it reads GP. The helical transmembrane segment at 122–145 threads the bilayer; sequence GPAAAAVVALGLGLGVLLMLGLDY. Aspartate 144 provides a ligand contact to Zn(2+). Aspartate 144 contributes to the Cd(2+) binding site. The Periplasmic segment spans residues 146-165; that stretch reads FTPHEHERTGHQGPEAARVN. A helical membrane pass occupies residues 166–190; sequence RVWLFVLTIILHNLPEGMAIGVSFA. Zn(2+) is bound at residue histidine 177. Cd(2+) is bound by residues histidine 177, asparagine 178, and glutamate 181. Position 181 (glutamate 181) interacts with Zn(2+). Topologically, residues 191–192 are extracellular; that stretch reads TG. Residues 193 to 222 traverse the membrane as a helical segment; that stretch reads DLRIGLPLTSAIAIQDVPEGLAVALALRAV. Glutamine 207 is a binding site for Zn(2+). Cd(2+)-binding residues include glutamine 207, aspartate 208, and glutamate 211. Glutamate 211 is a Zn(2+) binding site. Over 223–224 the chain is Periplasmic; the sequence is GL. Residues 225–251 form a helical membrane-spanning segment; the sequence is PIGRAVLVAVASGLMEPLGALVGVGIS. Glutamate 240 is a Cd(2+) binding site. Residues 252–255 lie on the Extracellular side of the membrane; the sequence is SGFA. The helical transmembrane segment at 256–275 threads the bilayer; that stretch reads LAYPISMGLAAGAMIFVVSH. Zn(2+) is bound by residues histidine 275, glutamate 276, and histidine 286. Position 275 (histidine 275) interacts with Cd(2+). Over 276–287 the chain is Periplasmic; that stretch reads EVIPETHRNGHE. The chain crosses the membrane as a helical span at residues 288–308; the sequence is TTATVGLMAGFALMMFLDTAL. A topological domain (extracellular) is located at residue glycine 309.

The protein belongs to the ZIP transporter (TC 2.A.5) family. In terms of assembly, homodimer. Also exists as a monomer.

The protein localises to the cell inner membrane. It catalyses the reaction Zn(2+)(in) = Zn(2+)(out). It carries out the reaction Cd(2+)(in) = Cd(2+)(out). Its function is as follows. Selective electrodiffusional channel that mediates the uptake of Zn(2+). Exploits in vivo zinc concentration gradients (maintained by cellular zinc homeostasis) to passively move zinc ions into the cytoplasm. ZIPB-mediated zinc flux is dependent upon pH, but independent of the proton motive force. Is also able to import Cd(2+), but is not permeable to Co(2+), Cu(2+), Fe(2+), Mn(2+) and Ni(2+). The chain is Zinc transporter ZIPB from Bordetella bronchiseptica (strain ATCC BAA-588 / NCTC 13252 / RB50) (Alcaligenes bronchisepticus).